We begin with the raw amino-acid sequence, 298 residues long: Serpentine receptor class delta-34 (298 aa).

Helical transmembrane passes span 10 to 30 (SSIM…FTQV), 54 to 74 (ACFF…FAIP), 99 to 119 (MILL…VITY), 158 to 178 (LATN…IVFI), 207 to 227 (LTIQ…AHLI), and 242 to 262 (VLYM…IVTI).

This sequence belongs to the nematode receptor-like protein srd family.

The protein localises to the membrane. In Caenorhabditis elegans, this protein is Serpentine receptor class delta-34 (srd-34).